The following is a 93-amino-acid chain: Phosphoribosyl-ATP pyrophosphatase (93 aa).

The protein belongs to the PRA-PH family.

The protein resides in the cytoplasm. It carries out the reaction 1-(5-phospho-beta-D-ribosyl)-ATP + H2O = 1-(5-phospho-beta-D-ribosyl)-5'-AMP + diphosphate + H(+). It functions in the pathway amino-acid biosynthesis; L-histidine biosynthesis; L-histidine from 5-phospho-alpha-D-ribose 1-diphosphate: step 2/9. The sequence is that of Phosphoribosyl-ATP pyrophosphatase from Corynebacterium aurimucosum (strain ATCC 700975 / DSM 44827 / CIP 107346 / CN-1) (Corynebacterium nigricans).